We begin with the raw amino-acid sequence, 369 residues long: UDP-N-acetyl-3-dehydro-alpha-D-glucosamine 3-aminotranferase (369 aa).

Lys-190 carries the N6-(pyridoxal phosphate)lysine modification.

Belongs to the DegT/DnrJ/EryC1 family. The cofactor is pyridoxal 5'-phosphate.

It catalyses the reaction UDP-2-acetamido-3-amino-2,3-dideoxy-alpha-D-glucopyranose + 2-oxoglutarate = UDP-2-acetamido-3-dehydro-2-deoxy-alpha-D-glucopyranose + L-glutamate. It functions in the pathway bacterial outer membrane biogenesis; LPS lipid A biosynthesis. Aminotranferase involved in the synthesis of 2,3-diamino-2,3-dideoxy-D-glucopyranose (GlcN3N), which is a component of lipid A in some species. Catalyzes the amination of UDP-2-acetamido-3-dehydro-2-deoxy-alpha-D-glucopyranose (UDP-3-oxo-GlcNAc) to UDP-2-acetamido-3-amino-2,3-dideoxy-alpha-D-glucopyranose (UDP-GlcNAc3N), using L-glutamate as the amine donor. Other amine donors, such as alanine and glutamine, can substitute for glutamate, but product formation is slower. This chain is UDP-N-acetyl-3-dehydro-alpha-D-glucosamine 3-aminotranferase, found in Acidithiobacillus ferrooxidans (strain ATCC 23270 / DSM 14882 / CIP 104768 / NCIMB 8455) (Ferrobacillus ferrooxidans (strain ATCC 23270)).